A 217-amino-acid polypeptide reads, in one-letter code: C-type lectin domain family 2 member I (217 aa).

Residues methionine 1 to lysine 53 are Cytoplasmic-facing. Residues leucine 54 to alanine 74 traverse the membrane as a helical; Signal-anchor for type II membrane protein segment. Residues leucine 75–valine 217 lie on the Extracellular side of the membrane. Cysteine 92 and cysteine 103 are joined by a disulfide. The 105-residue stretch at valine 99–serine 203 folds into the C-type lectin domain. N-linked (GlcNAc...) asparagine glycosylation occurs at asparagine 112. A disulfide bridge connects residues cysteine 120 and cysteine 202.

As to expression, detected in osteoblasts, growth plate chondrocytes and skeletal muscle overlying the bone (at protein level). Detected in spleen, B-cells, dendritic cells, thymus, and in IL2-activated natural killer cells.

It localises to the cell membrane. Inhibits osteoclast formation. Receptor for KLRB1F. Enhances T-cell activation. Plays a role in splenocyte activation, T-cell responses and IL-2 production. This Mus musculus (Mouse) protein is C-type lectin domain family 2 member I (Clec2i).